The following is a 622-amino-acid chain: Calmodulin-binding protein 60 C (622 aa).

A compositionally biased stretch (basic and acidic residues) spans 1–19 (MQTRYMERTNSMREKRKLE). Positions 1-35 (MQTRYMERTNSMREKRKLEEDDNQQQQQQPERKRP) are disordered. The segment at 10-89 (NSMREKRKLE…RLSERSSPKR (80 aa)) is calmodulin-binding. Positions 159 to 282 (EDDDGWSGEE…AFHKKLNKAG (124 aa)) are DNA-binding.

The protein belongs to the plant ACBP60 protein family. In terms of assembly, interacts with calmodulin (CaM). In terms of tissue distribution, expressed in stems, flowers and root.

Its subcellular location is the nucleus. Functionally, transcription activator that binds DNA in a sequence-specific manner, likely 5'-GAAATTTTGG-3', to promote the expression of target genes. The chain is Calmodulin-binding protein 60 C from Arabidopsis thaliana (Mouse-ear cress).